Consider the following 715-residue polypeptide: Bromodomain-containing protein DDB_G0278469 (715 aa).

Disordered regions lie at residues 18-46 and 186-425; these read EDNNNNNNNNNNKENINNDDNNINPNRNA and QQQK…ETKQ. 5 stretches are compositionally biased toward low complexity: residues 20 to 45, 186 to 204, 215 to 227, 234 to 254, and 261 to 281; these read NNNNNNNNNNKENINNDDNNINPNRN, QQQKQQQQQQQQQQAPTAQ, LTAATTTPTTTTT, TAPPTTVASSSTIPKTTTTKK, and SKSNLKSSQNKLSTTTTTTIT. Residues 307 to 316 are compositionally biased toward basic and acidic residues; that stretch reads KPKEQKKDIM. A coiled-coil region spans residues 322–368; sequence SKKANTHEEKEEGESEEEEEEEEEEEEEEEEEEEEEQLEDKQKQTKT. The span at 332-359 shows a compositional bias: acidic residues; it reads EEGESEEEEEEEEEEEEEEEEEEEEEQL. Polar residues predominate over residues 366–389; the sequence is TKTPISQNKSASSNIKPLSKTSKS. A compositionally biased stretch (low complexity) spans 405 to 414; sequence KKITSTTVTR. Positions 437–470 form a coiled coil; the sequence is KQQTQEEIEQELKLESIRKRIEQFINKFEKEIND. One can recognise a Bromo domain in the interval 474–599; sequence KDLDEGKRKI…IQFYKSLLET (126 aa). The segment at 653–715 is disordered; the sequence is LVDEDEDECL…SEEEDQEATN (63 aa). Polar residues predominate over residues 662–672; that stretch reads LNNQNNPTTYD. Positions 684–715 are enriched in acidic residues; that stretch reads QESDEESDEESDEESDEERDQLSEEEDQEATN.

This Dictyostelium discoideum (Social amoeba) protein is Bromodomain-containing protein DDB_G0278469.